Here is a 151-residue protein sequence, read N- to C-terminus: MD-2-related lipid-recognition protein (151 aa).

Positions 1–18 (MAALHWLLLAALLGCTLA) are cleaved as a signal peptide. 3 cysteine pairs are disulfide-bonded: Cys-27–Cys-141, Cys-45–Cys-51, and Cys-95–Cys-100. Asn-58 carries an N-linked (GlcNAc...) asparagine glycan.

In terms of processing, N-glycosylated. In terms of tissue distribution, hemolymph (at protein level). Constitutively expressed mainly in fat body and also in hemocytes and secreted into hemolymph. Not detected in midgut, epidermis, or Malpighian tubule of naive larvae.

It localises to the secreted. In terms of biological role, binds to lipopolysaccharide from a variety of Gram-negative bacteria and to lipid A. This Manduca sexta (Tobacco hawkmoth) protein is MD-2-related lipid-recognition protein.